Here is a 555-residue protein sequence, read N- to C-terminus: Small ribosomal subunit protein uS3m (555 aa).

The interval 1–20 is disordered; sequence MARKGNPISVRLGKNRSSDS.

This sequence belongs to the universal ribosomal protein uS3 family.

The protein localises to the mitochondrion. In Brassica napus (Rape), this protein is Small ribosomal subunit protein uS3m (RPS3).